A 1964-amino-acid polypeptide reads, in one-letter code: Probable helicase with zinc finger domain (1964 aa).

The segment at Ser-178–Glu-206 adopts a C3H1-type zinc-finger fold. The residue at position 248 (Ser-248) is a Phosphoserine. Residue Gly-668 to Thr-675 participates in ATP binding. The short motif at Asp-794–Ala-797 is the DEAA box element. The span at His-1116–Pro-1127 shows a compositional bias: polar residues. The interval His-1116 to His-1135 is disordered. Residue Thr-1163 is modified to Phosphothreonine. The residue at position 1245 (Arg-1245) is an Omega-N-methylarginine. Disordered stretches follow at residues Pro-1248–Pro-1350, His-1360–Thr-1379, Leu-1388–Pro-1449, Gln-1463–Thr-1491, Gln-1631–Asn-1655, and Gln-1743–Lys-1964. Composition is skewed to basic and acidic residues over residues His-1268–Lys-1281 and Asn-1292–Asp-1308. Residues Pro-1365 to Ala-1374 show a composition bias toward pro residues. The span at Leu-1388 to Pro-1431 shows a compositional bias: low complexity. Over residues Arg-1635–Pro-1644 the composition is skewed to pro residues. Phosphoserine is present on residues Ser-1636, Ser-1760, Ser-1763, and Ser-1788. Positions Ser-1755–Pro-1765 are enriched in polar residues. Composition is skewed to polar residues over residues Pro-1799 to Ser-1813 and Trp-1826 to Pro-1849. Over residues Lys-1860 to Ser-1870 the composition is skewed to basic and acidic residues. Composition is skewed to polar residues over residues Glu-1872–Met-1881 and Ile-1897–Ala-1910. Residues Pro-1941–Ser-1956 show a composition bias toward low complexity.

Belongs to the DNA2/NAM7 helicase family. In terms of assembly, interacts with POLR2A. Interacts with SMYD3; the interaction may bridge SMYD3 and RNA polymerase II. Interacts with SMYD2.

The protein localises to the nucleus. May act as a helicase that plays a role in RNA metabolism in multiple tissues and organs within the developing embryo. This chain is Probable helicase with zinc finger domain (Helz), found in Mus musculus (Mouse).